The primary structure comprises 663 residues: Fructose-1,6-bisphosphatase class 3 1 (663 aa).

It belongs to the FBPase class 3 family. The cofactor is Mn(2+).

The catalysed reaction is beta-D-fructose 1,6-bisphosphate + H2O = beta-D-fructose 6-phosphate + phosphate. It participates in carbohydrate biosynthesis; gluconeogenesis. The polypeptide is Fructose-1,6-bisphosphatase class 3 1 (Clostridium beijerinckii (strain ATCC 51743 / NCIMB 8052) (Clostridium acetobutylicum)).